The sequence spans 31 residues: Hyaluronidase (31 aa).

This sequence belongs to the glycosyl hydrolase 56 family. Contains 2 disulfide bonds. Post-translationally, N-glycosylated on at least two Asn residues by identical heptasaccharide units composed of Man, GlcNAc, and Fuc residues in the molar ration of 3:2:2. As to expression, expressed by the venom gland.

Its subcellular location is the secreted. It carries out the reaction Random hydrolysis of (1-&gt;4)-linkages between N-acetyl-beta-D-glucosamine and D-glucuronate residues in hyaluronate.. Hydrolyzes high molecular weight hyaluronic acid to produce small oligosaccharides. In Vespula maculifrons (Eastern yellow jacket), this protein is Hyaluronidase.